We begin with the raw amino-acid sequence, 196 residues long: Probable malonic semialdehyde reductase RutE (196 aa).

It belongs to the nitroreductase family. HadB/RutE subfamily. FMN is required as a cofactor.

The catalysed reaction is 3-hydroxypropanoate + NADP(+) = 3-oxopropanoate + NADPH + H(+). Its function is as follows. May reduce toxic product malonic semialdehyde to 3-hydroxypropionic acid, which is excreted. This Escherichia coli O6:H1 (strain CFT073 / ATCC 700928 / UPEC) protein is Probable malonic semialdehyde reductase RutE.